The primary structure comprises 179 residues: Large ribosomal subunit protein uL5 (179 aa).

Belongs to the universal ribosomal protein uL5 family. In terms of assembly, part of the 50S ribosomal subunit; part of the 5S rRNA/L5/L18/L25 subcomplex. Contacts the 5S rRNA and the P site tRNA. Forms a bridge to the 30S subunit in the 70S ribosome.

Functionally, this is one of the proteins that bind and probably mediate the attachment of the 5S RNA into the large ribosomal subunit, where it forms part of the central protuberance. In the 70S ribosome it contacts protein S13 of the 30S subunit (bridge B1b), connecting the 2 subunits; this bridge is implicated in subunit movement. Contacts the P site tRNA; the 5S rRNA and some of its associated proteins might help stabilize positioning of ribosome-bound tRNAs. The protein is Large ribosomal subunit protein uL5 of Erwinia tasmaniensis (strain DSM 17950 / CFBP 7177 / CIP 109463 / NCPPB 4357 / Et1/99).